We begin with the raw amino-acid sequence, 351 residues long: Phospho-N-acetylmuramoyl-pentapeptide-transferase (351 aa).

The next 10 membrane-spanning stretches (helical) occupy residues 17–37 (MAYATIFAFLLSLIVGPYIIL), 62–82 (GIPTMGGILIFFCVFISLVFW), 85–105 (ILNVYFLIMVFVMLGFAFLGF), 130–150 (IIFSFFSVGILYYFGGEHVSV), 158–178 (SFQIDLGLFYIPFGMFILISA), 190–210 (GLAIGLSIVITGALIIIAYLT), 230–250 (LVIFLGALLGGSFGFLWFNAY), 254–274 (IMMGDTGSLALGAILGMAALI), 279–299 (ILFSILAGVFIIETMSVIIQV), and 328–348 (QVVIRFWIIGLIFAIIALSTI).

The protein belongs to the glycosyltransferase 4 family. MraY subfamily. The cofactor is Mg(2+).

It localises to the cell inner membrane. The enzyme catalyses UDP-N-acetyl-alpha-D-muramoyl-L-alanyl-gamma-D-glutamyl-meso-2,6-diaminopimeloyl-D-alanyl-D-alanine + di-trans,octa-cis-undecaprenyl phosphate = di-trans,octa-cis-undecaprenyl diphospho-N-acetyl-alpha-D-muramoyl-L-alanyl-D-glutamyl-meso-2,6-diaminopimeloyl-D-alanyl-D-alanine + UMP. The protein operates within cell wall biogenesis; peptidoglycan biosynthesis. Functionally, catalyzes the initial step of the lipid cycle reactions in the biosynthesis of the cell wall peptidoglycan: transfers peptidoglycan precursor phospho-MurNAc-pentapeptide from UDP-MurNAc-pentapeptide onto the lipid carrier undecaprenyl phosphate, yielding undecaprenyl-pyrophosphoryl-MurNAc-pentapeptide, known as lipid I. In Borreliella burgdorferi (strain ATCC 35210 / DSM 4680 / CIP 102532 / B31) (Borrelia burgdorferi), this protein is Phospho-N-acetylmuramoyl-pentapeptide-transferase.